Consider the following 218-residue polypeptide: Glycerol-3-phosphate acyltransferase (218 aa).

Helical transmembrane passes span 3 to 23, 53 to 73, 82 to 102, 112 to 132, 142 to 162, and 166 to 186; these read FAIF…YWIA, GFPV…LSGI, FQLA…FLGF, LGVF…VFLV, IGSI…SILL, and EVSY…ILTH.

Belongs to the PlsY family. In terms of assembly, probably interacts with PlsX.

The protein localises to the cell inner membrane. The enzyme catalyses an acyl phosphate + sn-glycerol 3-phosphate = a 1-acyl-sn-glycero-3-phosphate + phosphate. Its pathway is lipid metabolism; phospholipid metabolism. In terms of biological role, catalyzes the transfer of an acyl group from acyl-phosphate (acyl-PO(4)) to glycerol-3-phosphate (G3P) to form lysophosphatidic acid (LPA). This enzyme utilizes acyl-phosphate as fatty acyl donor, but not acyl-CoA or acyl-ACP. The polypeptide is Glycerol-3-phosphate acyltransferase (Leptospira borgpetersenii serovar Hardjo-bovis (strain JB197)).